Consider the following 374-residue polypeptide: Carboxypeptidase O (374 aa).

The first 20 residues, 1–20 (MKPLLETLYLLGMLVPGGLG), serve as a signal peptide directing secretion. The 296-residue stretch at 49-344 (IYHPMGEIYE…EAVLSVLDDV (296 aa)) folds into the Peptidase M14 domain. Zn(2+) contacts are provided by His108 and Glu111. 3 N-linked (GlcNAc...) asparagine glycosylation sites follow: Asn132, Asn174, and Asn187. A Zn(2+)-binding site is contributed by His236. Residue Asn251 is glycosylated (N-linked (GlcNAc...) asparagine). Glu310 functions as the Proton donor/acceptor in the catalytic mechanism. A lipid anchor (GPI-anchor amidated aspartate) is attached at Asp352. Residues 353 to 374 (SAGRVTSATMLLGLLVSCMSLL) constitute a propeptide, removed in mature form.

The protein belongs to the peptidase M14 family. Zn(2+) is required as a cofactor. N-glycosylated. As to expression, detected in enterocytes of the ileum.

The protein localises to the apical cell membrane. With respect to regulation, strongly inhibited by potato carboxypeptidase inhibitor, and the chelating agents EDTA and 1,10-phenanthroline. Also inhibited by compounds with multiple carboxylic acid groups such as citrate and succinate, and to a lesser exent the amino acids aspartate and glutamate. Not significantly inhibited by benzylsuccinic acid. Carboxypeptidase which preferentially cleaves C-terminal acidic residues from peptides and proteins. Can also cleave C-terminal hydrophobic amino acids, with a preference for small residues over large residues. This Homo sapiens (Human) protein is Carboxypeptidase O.